The primary structure comprises 394 residues: Proliferation-associated protein 2G4 (394 aa).

S2 is subject to N-acetylserine. The residue at position 2 (S2) is a Phosphoserine. The interval 2 to 48 (SGEDEQQEQTIAEDLVVTKYKMGGDIANRVLRSLVEASSSGVSVLSL) is necessary for nucleolar localization. Residues 46–54 (LSLCEKGDA) form an RNA-binding region. A Glycyl lysine isopeptide (Lys-Gly) (interchain with G-Cter in SUMO2) cross-link involves residue K298. The interval 301–394 (LLQPFNVLYE…ETLEENGAGD (94 aa)) is necessary for nucleolar localization. The residue at position 335 (S335) is a Phosphoserine. The disordered stretch occupies residues 358 to 394 (LQSSASRKTQKKKKKKASKTAENATSGETLEENGAGD). Position 361 is a phosphoserine; by PKC/PRKCD (S361). Residues 361 to 375 (SASRKTQKKKKKKAS) are interaction with RNA. A compositionally biased stretch (basic residues) spans 365-375 (KTQKKKKKKAS). T366 and T386 each carry phosphothreonine.

The protein belongs to the peptidase M24 family. As to quaternary structure, isoform 2 interacts with the cytoplasmic domain of non-phosphorylated ERBB3; the interaction requires PKC activity. Interacts with AR. Treatment with HRG leads to dissociation from ERBB3 and increases association with AR. Interacts with nucleolin/NCL. Component of a ribonucleoprotein complex containing at least PA2G4, NCL, TOP1, PABPC2, RPLP0, acetylated histone H1 (HIST1H1A or H1F1), histone H1 2/4, RPL4, RPL8, RPL15, RPL18, RPL18A, RPL21, RPL11, RPL12, RPL28, RPL27, RPLP2 and RPL24. Interacts with HDAC2. Interacts with RB1; the interaction is enhanced upon PA2G4 dephosphorylation. Isoform 1 and isoform 2 interact with RNF20. Isoform 2 interacts with HUWE1. Interacts with AKT1. Interacts with DNAJC21. Post-translationally, phosphorylated on serine and threonine residues. Phosphorylation is enhanced by HRG treatment. Basal phosphorylation is PKC-dependent and HRG-induced phosphorylation is predominantly PKC-independent. Phosphorylation at Ser-361 by PKC/PRKCD regulates its nucleolar localization. Isoform 2 is polyubiquitinated, leading to proteasomal degradation and phosphorylation by PKC/PRKCD enhances polyubiquitination.

It is found in the cytoplasm. Its subcellular location is the nucleus. It localises to the nucleolus. In terms of biological role, may play a role in a ERBB3-regulated signal transduction pathway. Seems be involved in growth regulation. Acts a corepressor of the androgen receptor (AR) and is regulated by the ERBB3 ligand neuregulin-1/heregulin (HRG). Inhibits transcription of some E2F1-regulated promoters, probably by recruiting histone acetylase (HAT) activity. Binds RNA. Associates with 28S, 18S and 5.8S mature rRNAs, several rRNA precursors and probably U3 small nucleolar RNA. May be involved in regulation of intermediate and late steps of rRNA processing. May be involved in ribosome assembly. Mediates cap-independent translation of specific viral IRESs (internal ribosomal entry site). Together with PTBP1 is required for the translation initiation on the foot-and-mouth disease virus (FMDV) IRES. Regulates cell proliferation, differentiation, and survival. Isoform 1 suppresses apoptosis whereas isoform 2 promotes cell differentiation. The sequence is that of Proliferation-associated protein 2G4 (Pa2g4) from Rattus norvegicus (Rat).